The primary structure comprises 279 residues: Reaction center protein L chain (279 aa).

3 helical membrane-spanning segments follow: residues 33–56, 85–113, and 116–141; these read GFFGVTTLFFSVLGTALIIWGASQ, GLWQIITVCAIGAFVSWALREVEICRKLG, and YHVPIAFSFAILAYVTLVVIRPILMG. Residues H154 and H174 each contribute to the (7R,8Z)-bacteriochlorophyll b site. A helical membrane pass occupies residues 171–200; it reads NPAHMLAITFFFTTTLAMSMHGGLILSAAN. H191 serves as a coordination point for Fe cation. A ubiquinone is bound at residue F217. The helical transmembrane segment at 226 to 252 threads the bilayer; sequence GSLGIHRLGLFLALSAAFWSAVCIVIS. A Fe cation-binding site is contributed by H231.

This sequence belongs to the reaction center PufL/M/PsbA/D family. Reaction center is composed of four bacteriochlorophylls, two bacteriopheophytins, two ubiquinones, one iron, and three highly hydrophobic polypeptide chains (designated L, M, and H).

The protein resides in the cell inner membrane. Functionally, the reaction center is a membrane-bound complex that mediates the initial photochemical event in the electron transfer process of photosynthesis. This chain is Reaction center protein L chain (pufL), found in Rubrivivax gelatinosus (Rhodocyclus gelatinosus).